Consider the following 396-residue polypeptide: Tyrosine--tRNA ligase (396 aa).

The short motif at 43 to 52 (PSSPDIHLGH) is the 'HIGH' region element. A 'KMSKS' region motif is present at residues 227–231 (KMSKS). Lys-230 is an ATP binding site. The 59-residue stretch at 338-396 (ICVIDFIIKADLAKSKSEARRLLEQGGVEINSAKISDPGTTVKCGDIIKAGKRRYSKAV) folds into the S4 RNA-binding domain.

Belongs to the class-I aminoacyl-tRNA synthetase family. TyrS type 2 subfamily. In terms of assembly, homodimer.

The protein resides in the cytoplasm. It carries out the reaction tRNA(Tyr) + L-tyrosine + ATP = L-tyrosyl-tRNA(Tyr) + AMP + diphosphate + H(+). Functionally, catalyzes the attachment of tyrosine to tRNA(Tyr) in a two-step reaction: tyrosine is first activated by ATP to form Tyr-AMP and then transferred to the acceptor end of tRNA(Tyr). The polypeptide is Tyrosine--tRNA ligase (Dehalococcoides mccartyi (strain ATCC BAA-2266 / KCTC 15142 / 195) (Dehalococcoides ethenogenes (strain 195))).